Here is a 966-residue protein sequence, read N- to C-terminus: C4 phosphoenolpyruvate carboxylase (966 aa).

A Phosphoserine modification is found at serine 11. The active site involves histidine 172. D-glucose 6-phosphate contacts are provided by tryptophan 283, arginine 450, and aspartate 597. Residue lysine 600 is part of the active site. Arginine 635 serves as a coordination point for D-glucose 6-phosphate. Arginine 641 is a catalytic residue. Arginine 641 is a binding site for L-aspartate. Residue threonine 665 coordinates D-glucose 6-phosphate. Glutamine 673 lines the L-aspartate pocket. Residues arginine 753 and 767 to 769 (RAI) contribute to the D-glucose 6-phosphate site. L-aspartate contacts are provided by lysine 829, arginine 888, and asparagine 964.

The protein belongs to the PEPCase type 1 family. Homotetramer. The cofactor is Mg(2+). As to expression, expressed in mesophyll cells, but not in bundle-sheath, roots, stems and flowers.

The protein resides in the cytoplasm. It carries out the reaction oxaloacetate + phosphate = phosphoenolpyruvate + hydrogencarbonate. It functions in the pathway photosynthesis; C4 acid pathway. With respect to regulation, 5 fold activation by the allosteric regulator glucose-6-phosphate. Low sensitivity to inhibition by L-malate and L-aspartate. Up-regulated by light-reversible phosphorylation. In terms of biological role, forms oxaloacetate through the carboxylation of phosphoenolpyruvate (PEP). Catalyzes the first step of C4 photosynthesis. The polypeptide is C4 phosphoenolpyruvate carboxylase (Flaveria trinervia (Clustered yellowtops)).